The following is a 249-amino-acid chain: 5'-nucleotidase SurE (249 aa).

A divalent metal cation-binding residues include aspartate 8, aspartate 9, serine 39, and asparagine 91.

This sequence belongs to the SurE nucleotidase family. A divalent metal cation is required as a cofactor.

It localises to the cytoplasm. It catalyses the reaction a ribonucleoside 5'-phosphate + H2O = a ribonucleoside + phosphate. Its function is as follows. Nucleotidase that shows phosphatase activity on nucleoside 5'-monophosphates. This is 5'-nucleotidase SurE from Pseudomonas aeruginosa (strain UCBPP-PA14).